The sequence spans 1155 residues: DNA-directed RNA polymerase subunit beta (1155 aa).

It belongs to the RNA polymerase beta chain family. The RNAP catalytic core consists of 2 alpha, 1 beta, 1 beta' and 1 omega subunit. When a sigma factor is associated with the core the holoenzyme is formed, which can initiate transcription.

The enzyme catalyses RNA(n) + a ribonucleoside 5'-triphosphate = RNA(n+1) + diphosphate. Functionally, DNA-dependent RNA polymerase catalyzes the transcription of DNA into RNA using the four ribonucleoside triphosphates as substrates. The chain is DNA-directed RNA polymerase subunit beta from Borrelia garinii subsp. bavariensis (strain ATCC BAA-2496 / DSM 23469 / PBi) (Borreliella bavariensis).